The following is a 260-amino-acid chain: Tryptophan synthase alpha chain (260 aa).

Residues Glu-52 and Asp-63 each act as proton acceptor in the active site.

It belongs to the TrpA family. Tetramer of two alpha and two beta chains.

The enzyme catalyses (1S,2R)-1-C-(indol-3-yl)glycerol 3-phosphate + L-serine = D-glyceraldehyde 3-phosphate + L-tryptophan + H2O. The protein operates within amino-acid biosynthesis; L-tryptophan biosynthesis; L-tryptophan from chorismate: step 5/5. Functionally, the alpha subunit is responsible for the aldol cleavage of indoleglycerol phosphate to indole and glyceraldehyde 3-phosphate. The protein is Tryptophan synthase alpha chain of Streptococcus mutans serotype c (strain ATCC 700610 / UA159).